A 170-amino-acid chain; its full sequence is Single-stranded DNA-binding protein (170 aa).

Positions 1–26 (MSNELKQVEQTEEAVVVSETKDYIKV) are oligomerization.

This sequence belongs to the phi29likevirus single-strand-binding protein family. As to quaternary structure, hexamer.

Single-stranded DNA-binding protein required for the elongation during viral DNA replication by strand displacement. Displaced viral DNA strands are transiently coated with the ssDNA-binding protein and therefore protected againt nucleases. The latter is then probably removed by the replisome that performs lagging strand synthesis or during the events that lead up to the recombination process. Has helix-destabilizing activity since it removes secondary structure from the ssDNA in replicative intermediates. In Bacillus subtilis (Bacteriophage GA-1), this protein is Single-stranded DNA-binding protein.